A 246-amino-acid chain; its full sequence is Biosynthetic peptidoglycan transglycosylase (246 aa).

A helical transmembrane segment spans residues 20–42 (SLRWVLAAPLLFAAASVLQVLAL).

It belongs to the glycosyltransferase 51 family.

Its subcellular location is the cell inner membrane. The enzyme catalyses [GlcNAc-(1-&gt;4)-Mur2Ac(oyl-L-Ala-gamma-D-Glu-L-Lys-D-Ala-D-Ala)](n)-di-trans,octa-cis-undecaprenyl diphosphate + beta-D-GlcNAc-(1-&gt;4)-Mur2Ac(oyl-L-Ala-gamma-D-Glu-L-Lys-D-Ala-D-Ala)-di-trans,octa-cis-undecaprenyl diphosphate = [GlcNAc-(1-&gt;4)-Mur2Ac(oyl-L-Ala-gamma-D-Glu-L-Lys-D-Ala-D-Ala)](n+1)-di-trans,octa-cis-undecaprenyl diphosphate + di-trans,octa-cis-undecaprenyl diphosphate + H(+). It participates in cell wall biogenesis; peptidoglycan biosynthesis. Its function is as follows. Peptidoglycan polymerase that catalyzes glycan chain elongation from lipid-linked precursors. The protein is Biosynthetic peptidoglycan transglycosylase of Xanthomonas campestris pv. campestris (strain 8004).